The following is a 254-amino-acid chain: Imidazole glycerol phosphate synthase subunit HisF (254 aa).

Active-site residues include Asp-11 and Asp-130.

The protein belongs to the HisA/HisF family. As to quaternary structure, heterodimer of HisH and HisF.

The protein localises to the cytoplasm. The enzyme catalyses 5-[(5-phospho-1-deoxy-D-ribulos-1-ylimino)methylamino]-1-(5-phospho-beta-D-ribosyl)imidazole-4-carboxamide + L-glutamine = D-erythro-1-(imidazol-4-yl)glycerol 3-phosphate + 5-amino-1-(5-phospho-beta-D-ribosyl)imidazole-4-carboxamide + L-glutamate + H(+). Its pathway is amino-acid biosynthesis; L-histidine biosynthesis; L-histidine from 5-phospho-alpha-D-ribose 1-diphosphate: step 5/9. In terms of biological role, IGPS catalyzes the conversion of PRFAR and glutamine to IGP, AICAR and glutamate. The HisF subunit catalyzes the cyclization activity that produces IGP and AICAR from PRFAR using the ammonia provided by the HisH subunit. The sequence is that of Imidazole glycerol phosphate synthase subunit HisF from Laribacter hongkongensis (strain HLHK9).